The following is a 418-amino-acid chain: UDP-N-acetylglucosamine 1-carboxyvinyltransferase 2 (418 aa).

22 to 23 (KN) lines the phosphoenolpyruvate pocket. Arg92 provides a ligand contact to UDP-N-acetyl-alpha-D-glucosamine. Residue Cys116 is the Proton donor of the active site. 2-(S-cysteinyl)pyruvic acid O-phosphothioketal is present on Cys116. Residues Asp305 and Ile327 each coordinate UDP-N-acetyl-alpha-D-glucosamine.

Belongs to the EPSP synthase family. MurA subfamily.

The protein resides in the cytoplasm. The enzyme catalyses phosphoenolpyruvate + UDP-N-acetyl-alpha-D-glucosamine = UDP-N-acetyl-3-O-(1-carboxyvinyl)-alpha-D-glucosamine + phosphate. It participates in cell wall biogenesis; peptidoglycan biosynthesis. Functionally, cell wall formation. Adds enolpyruvyl to UDP-N-acetylglucosamine. The chain is UDP-N-acetylglucosamine 1-carboxyvinyltransferase 2 from Mesorhizobium japonicum (strain LMG 29417 / CECT 9101 / MAFF 303099) (Mesorhizobium loti (strain MAFF 303099)).